The chain runs to 362 residues: Aspartate carbamoyltransferase catalytic subunit (362 aa).

The disordered stretch occupies residues 1-22 (MPKTAMTDSTSKTSTNTASSDM). A compositionally biased stretch (low complexity) spans 7–20 (TDSTSKTSTNTASS). Positions 100 and 101 each coordinate carbamoyl phosphate. Lys-128 lines the L-aspartate pocket. Carbamoyl phosphate contacts are provided by Arg-150, His-180, and Gln-183. L-aspartate contacts are provided by Arg-214 and Arg-269. Positions 310 and 311 each coordinate carbamoyl phosphate.

Belongs to the aspartate/ornithine carbamoyltransferase superfamily. ATCase family. In terms of assembly, heterododecamer (2C3:3R2) of six catalytic PyrB chains organized as two trimers (C3), and six regulatory PyrI chains organized as three dimers (R2).

It catalyses the reaction carbamoyl phosphate + L-aspartate = N-carbamoyl-L-aspartate + phosphate + H(+). It participates in pyrimidine metabolism; UMP biosynthesis via de novo pathway; (S)-dihydroorotate from bicarbonate: step 2/3. Its function is as follows. Catalyzes the condensation of carbamoyl phosphate and aspartate to form carbamoyl aspartate and inorganic phosphate, the committed step in the de novo pyrimidine nucleotide biosynthesis pathway. In Psychrobacter sp. (strain PRwf-1), this protein is Aspartate carbamoyltransferase catalytic subunit.